The primary structure comprises 533 residues: Early growth response protein 1 (533 aa).

2 disordered regions span residues 1 to 94 and 161 to 237; these read MAAA…EQPY and MTNP…PPPA. Residues 68-77 show a composition bias toward gly residues; that stretch reads SGGGGGGGSN. Residues 164-189 are compositionally biased toward low complexity; that stretch reads PPTSSSSAPSPAASSSSSASQSPPLS. Residue lysine 303 forms a Glycyl lysine isopeptide (Lys-Gly) (interchain with G-Cter in SUMO2) linkage. A disordered region spans residues 316–336; it reads PSRMRKYPNRPSKTPPHERPY. 3 consecutive C2H2-type zinc fingers follow at residues 336 to 360, 366 to 388, and 394 to 416; these read YACP…IRIH, FQCR…IRTH, and FACD…TKIH. The segment at 407 to 478 is disordered; the sequence is DERKRHTKIH…SSTYPSPAHS (72 aa). Over residues 411–421 the composition is skewed to basic residues; the sequence is RHTKIHLRQKD. The segment covering 427 to 475 has biased composition (low complexity); that stretch reads SVVASPAASSLSSYPSPVATSYPSPATTSFPSPVPTSYSSPGSSTYPSP.

This sequence belongs to the EGR C2H2-type zinc-finger protein family. As to quaternary structure, interacts with SNAI1 and SP1 upon 12-O-tetradecanoylphorbol-13-acetate (TPA) induction. In terms of tissue distribution, detected in lung vasculature and in mononuclear phagocytes. Detected in liver (at protein level). Expressed in the liver in a circadian manner.

Its subcellular location is the nucleus. It is found in the cytoplasm. Its function is as follows. Transcriptional regulator. Recognizes and binds to the DNA sequence 5'-GCG(T/G)GGGCG-3'(EGR-site) in the promoter region of target genes. Binds double-stranded target DNA, irrespective of the cytosine methylation status. Regulates the transcription of numerous target genes, and thereby plays an important role in regulating the response to growth factors, DNA damage, and ischemia. Plays a role in the regulation of cell survival, proliferation and cell death. Activates expression of p53/TP53 and TGFB1, and thereby helps prevent tumor formation. Required for normal progress through mitosis and normal proliferation of hepatocytes after partial hepatectomy. Mediates responses to ischemia and hypoxia; regulates the expression of proteins such as IL1B and CXCL2 that are involved in inflammatory processes and development of tissue damage after ischemia. Regulates biosynthesis of luteinizing hormone (LHB) in the pituitary. Regulates the amplitude of the expression rhythms of clock genes: BMAL1, PER2 and NR1D1 in the liver via the activation of PER1 (clock repressor) transcription. Regulates the rhythmic expression of core-clock gene BMAL1 in the suprachiasmatic nucleus (SCN). The chain is Early growth response protein 1 (Egr1) from Mus musculus (Mouse).